The sequence spans 797 residues: Mitochondrial inner membrane m-AAA protease component AFG3L2 (797 aa).

The transit peptide at 1 to 38 directs the protein to the mitochondrion; sequence MAHRCLRLWGRGGCWPRGLQQLLVPGGVGPGEQPCLRT. Residues 39–66 constitute a propeptide, removed in mature form; that stretch reads LYRFVTTQARASRNSLLTDIIAAYQRFC. Topologically, residues 39–142 are mitochondrial matrix; it reads LYRFVTTQAR…KGDIPWDDKD (104 aa). A disordered region spans residues 76-126; sequence YFPNGKNGKKASEPKEVMGEKKESKPAATTRSSGGGGGGGGKRGGKKDDSH. Residues 85–100 are compositionally biased toward basic and acidic residues; it reads KASEPKEVMGEKKESK. Positions 108–117 are enriched in gly residues; it reads SGGGGGGGGK. N6-succinyllysine is present on lysine 117. The helical transmembrane segment at 143 to 163 threads the bilayer; it reads FRMFFLWTALFWGGVMFYLLL. Topologically, residues 164 to 250 are mitochondrial intermembrane; that stretch reads KRSGREITWK…VPVVYIAESD (87 aa). Residues 251–271 form a helical membrane-spanning segment; that stretch reads GSFLLSMLPTVLIIAFLLYTI. Residues 272 to 797 lie on the Mitochondrial matrix side of the membrane; that stretch reads RRGPAGIGRT…EEPPGEKVAN (526 aa). ATP is bound by residues valine 310, alanine 311, threonine 352, glycine 353, lysine 354, threonine 355, leucine 356, and histidine 490. Histidine 574 is a binding site for Zn(2+). The active site involves glutamate 575. Residues histidine 578 and aspartate 649 each coordinate Zn(2+). The disordered stretch occupies residues 759–797; it reads FVEGTGSLDEDTSLPEGLKDWNKEREKEKEEPPGEKVAN. The segment covering 775-797 has biased composition (basic and acidic residues); sequence GLKDWNKEREKEKEEPPGEKVAN.

It in the N-terminal section; belongs to the AAA ATPase family. The protein in the C-terminal section; belongs to the peptidase M41 family. As to quaternary structure, homohexamer. Forms heterohexamers with SPG7. The m-AAA protease is either composed of homohexamers of AFG3L2 or heterohexamers of AFG3L2 and SPG7. Interacts with MAIP1. Interacts with DNAJC19. Interacts with PHB2. It depends on Zn(2+) as a cofactor. Post-translationally, upon import into the mitochondrion, the N-terminal transit peptide is cleaved to generate an intermediate form which undergoes autocatalytic proteolytic processing to generate the proteolytically active mature form. As to expression, ubiquitous. Highly expressed in the cerebellar Purkinje cells.

The protein resides in the mitochondrion inner membrane. It catalyses the reaction ATP + H2O = ADP + phosphate + H(+). Catalytic component of the m-AAA protease, a protease that plays a key role in proteostasis of inner mitochondrial membrane proteins, and which is essential for axonal and neuron development. AFG3L2 possesses both ATPase and protease activities: the ATPase activity is required to unfold substrates, threading them into the internal proteolytic cavity for hydrolysis into small peptide fragments. The m-AAA protease carries out quality control in the inner membrane of the mitochondria by mediating degradation of mistranslated or misfolded polypeptides. The m-AAA protease complex also promotes the processing and maturation of mitochondrial proteins, such as MRPL32/bL32m, PINK1 and SP7. Mediates protein maturation of the mitochondrial ribosomal subunit MRPL32/bL32m by catalyzing the cleavage of the presequence of MRPL32/bL32m prior to assembly into the mitochondrial ribosome. Required for SPG7 maturation into its active mature form after SPG7 cleavage by mitochondrial-processing peptidase (MPP). Required for the maturation of PINK1 into its 52kDa mature form after its cleavage by mitochondrial-processing peptidase (MPP). Acts as a regulator of calcium in neurons by mediating degradation of SMDT1/EMRE before its assembly with the uniporter complex, limiting the availability of SMDT1/EMRE for MCU assembly and promoting efficient assembly of gatekeeper subunits with MCU. Promotes the proteolytic degradation of GHITM upon hyperpolarization of mitochondria: progressive GHITM degradation leads to respiratory complex I degradation and broad reshaping of the mitochondrial proteome by AFG3L2. Also acts as a regulator of mitochondrial glutathione homeostasis by mediating cleavage and degradation of SLC25A39. SLC25A39 cleavage is prevented when SLC25A39 binds iron-sulfur. Involved in the regulation of OMA1-dependent processing of OPA1. May act by mediating processing of OMA1 precursor, participating in OMA1 maturation. This is Mitochondrial inner membrane m-AAA protease component AFG3L2 from Homo sapiens (Human).